The chain runs to 330 residues: Phenylalanine--tRNA ligase alpha subunit (330 aa).

Glu-254 contributes to the Mg(2+) binding site.

The protein belongs to the class-II aminoacyl-tRNA synthetase family. Phe-tRNA synthetase alpha subunit type 1 subfamily. In terms of assembly, tetramer of two alpha and two beta subunits. Mg(2+) is required as a cofactor.

Its subcellular location is the cytoplasm. The catalysed reaction is tRNA(Phe) + L-phenylalanine + ATP = L-phenylalanyl-tRNA(Phe) + AMP + diphosphate + H(+). The chain is Phenylalanine--tRNA ligase alpha subunit (pheS) from Neisseria meningitidis serogroup A / serotype 4A (strain DSM 15465 / Z2491).